A 443-amino-acid polypeptide reads, in one-letter code: Chromosomal replication initiator protein DnaA (443 aa).

The domain I, interacts with DnaA modulators stretch occupies residues 1–76 (MMDAWPRCLE…GNGEVALAVG (76 aa)). The segment at 76-105 (GSRPRAPEPAPAPVAATIAPQAAPIAPFAG) is domain II. The interval 106 to 323 (NLDSHYTFAN…GALNTLVARA (218 aa)) is domain III, AAA+ region. ATP contacts are provided by G151, G153, K154, and T155. The tract at residues 324 to 443 (NFTGRSITVE…WEKLIRKLSE (120 aa)) is domain IV, binds dsDNA.

This sequence belongs to the DnaA family. Oligomerizes as a right-handed, spiral filament on DNA at oriC.

Its subcellular location is the cytoplasm. Functionally, plays an essential role in the initiation and regulation of chromosomal replication. ATP-DnaA binds to the origin of replication (oriC) to initiate formation of the DNA replication initiation complex once per cell cycle. Binds the DnaA box (a 9 base pair repeat at the origin) and separates the double-stranded (ds)DNA. Forms a right-handed helical filament on oriC DNA; dsDNA binds to the exterior of the filament while single-stranded (ss)DNA is stabiized in the filament's interior. The ATP-DnaA-oriC complex binds and stabilizes one strand of the AT-rich DNA unwinding element (DUE), permitting loading of DNA polymerase. After initiation quickly degrades to an ADP-DnaA complex that is not apt for DNA replication. Binds acidic phospholipids. The polypeptide is Chromosomal replication initiator protein DnaA (Xanthomonas oryzae pv. oryzae (strain KACC10331 / KXO85)).